Consider the following 236-residue polypeptide: tRNA (guanine-N(1)-)-methyltransferase (236 aa).

Residues Gly114 and 134 to 139 contribute to the S-adenosyl-L-methionine site; that span reads IGDYIL.

The protein belongs to the RNA methyltransferase TrmD family. Homodimer.

It localises to the cytoplasm. It catalyses the reaction guanosine(37) in tRNA + S-adenosyl-L-methionine = N(1)-methylguanosine(37) in tRNA + S-adenosyl-L-homocysteine + H(+). Functionally, specifically methylates guanosine-37 in various tRNAs. This chain is tRNA (guanine-N(1)-)-methyltransferase, found in Wolbachia pipientis wMel.